The chain runs to 145 residues: D-aminoacyl-tRNA deacylase (145 aa).

The Gly-cisPro motif, important for rejection of L-amino acids signature appears at 137–138 (GP).

Belongs to the DTD family. In terms of assembly, homodimer.

It is found in the cytoplasm. The catalysed reaction is glycyl-tRNA(Ala) + H2O = tRNA(Ala) + glycine + H(+). The enzyme catalyses a D-aminoacyl-tRNA + H2O = a tRNA + a D-alpha-amino acid + H(+). In terms of biological role, an aminoacyl-tRNA editing enzyme that deacylates mischarged D-aminoacyl-tRNAs. Also deacylates mischarged glycyl-tRNA(Ala), protecting cells against glycine mischarging by AlaRS. Acts via tRNA-based rather than protein-based catalysis; rejects L-amino acids rather than detecting D-amino acids in the active site. By recycling D-aminoacyl-tRNA to D-amino acids and free tRNA molecules, this enzyme counteracts the toxicity associated with the formation of D-aminoacyl-tRNA entities in vivo and helps enforce protein L-homochirality. The chain is D-aminoacyl-tRNA deacylase from Stutzerimonas stutzeri (strain A1501) (Pseudomonas stutzeri).